The sequence spans 446 residues: Probable glycine dehydrogenase (decarboxylating) subunit 1 (446 aa).

This sequence belongs to the GcvP family. N-terminal subunit subfamily. In terms of assembly, the glycine cleavage system is composed of four proteins: P, T, L and H. In this organism, the P 'protein' is a heterodimer of two subunits.

It carries out the reaction N(6)-[(R)-lipoyl]-L-lysyl-[glycine-cleavage complex H protein] + glycine + H(+) = N(6)-[(R)-S(8)-aminomethyldihydrolipoyl]-L-lysyl-[glycine-cleavage complex H protein] + CO2. In terms of biological role, the glycine cleavage system catalyzes the degradation of glycine. The P protein binds the alpha-amino group of glycine through its pyridoxal phosphate cofactor; CO(2) is released and the remaining methylamine moiety is then transferred to the lipoamide cofactor of the H protein. The chain is Probable glycine dehydrogenase (decarboxylating) subunit 1 from Xanthobacter autotrophicus (strain ATCC BAA-1158 / Py2).